The chain runs to 208 residues: Ribosomal RNA small subunit methyltransferase G (208 aa).

S-adenosyl-L-methionine is bound by residues G75, L80, 126 to 127 (VE), and R141.

Belongs to the methyltransferase superfamily. RNA methyltransferase RsmG family.

It is found in the cytoplasm. The enzyme catalyses guanosine(527) in 16S rRNA + S-adenosyl-L-methionine = N(7)-methylguanosine(527) in 16S rRNA + S-adenosyl-L-homocysteine. Its function is as follows. Specifically methylates the N7 position of guanine in position 527 of 16S rRNA. In Marinomonas sp. (strain MWYL1), this protein is Ribosomal RNA small subunit methyltransferase G.